The chain runs to 512 residues: Probable pectinesterase/pectinesterase inhibitor 54 (512 aa).

The N-terminal stretch at 1–24 (MGVIDMVLFWVLLVNALLIVDASS) is a signal peptide. Positions 29–193 (FAYQNEMQRH…SRLVSNSLTL (165 aa)) are pectinesterase inhibitor 54. N-linked (GlcNAc...) asparagine glycosylation is found at Asn71 and Asn131. The interval 229–496 (HVVVAKDGSG…FSVVKRRNGE (268 aa)) is pectinesterase 54. Gln302 is a substrate binding site. The active-site Proton donor; for pectinesterase activity is Asp325. Cysteines 339 and 359 form a disulfide. Asp346 serves as the catalytic Nucleophile; for pectinesterase activity. Arg415 and Trp417 together coordinate substrate.

In the N-terminal section; belongs to the PMEI family. It in the C-terminal section; belongs to the pectinesterase family. As to expression, expressed in siliques.

The protein localises to the secreted. The protein resides in the cell wall. It carries out the reaction [(1-&gt;4)-alpha-D-galacturonosyl methyl ester](n) + n H2O = [(1-&gt;4)-alpha-D-galacturonosyl](n) + n methanol + n H(+). The protein operates within glycan metabolism; pectin degradation; 2-dehydro-3-deoxy-D-gluconate from pectin: step 1/5. Functionally, acts in the modification of cell walls via demethylesterification of cell wall pectin. The protein is Probable pectinesterase/pectinesterase inhibitor 54 (PME54) of Arabidopsis thaliana (Mouse-ear cress).